The primary structure comprises 365 residues: 25S rRNA (uridine(2843)-N(3))-methyltransferase (365 aa).

This sequence belongs to the class I-like SAM-binding methyltransferase superfamily.

It is found in the cytoplasm. Its subcellular location is the nucleus. The enzyme catalyses uridine(2843) in 25S rRNA + S-adenosyl-L-methionine = N(3)-methyluridine(2843) in 25S rRNA + S-adenosyl-L-homocysteine + H(+). Functionally, S-adenosyl-L-methionine-dependent methyltransferase that specifically methylates the N(3) position of uridine 2843 (m3U2843) in 25S rRNA. In Saccharomyces cerevisiae (strain ATCC 204508 / S288c) (Baker's yeast), this protein is 25S rRNA (uridine(2843)-N(3))-methyltransferase (BMT6).